The following is a 376-amino-acid chain: Chaperone protein DnaJ (376 aa).

Residues 5–70 (DFYDVLGVSK…EKKQNYDNFG (66 aa)) form the J domain. The segment at 137-215 (GKKQDIKFST…CNGQGNKQAS (79 aa)) adopts a CR-type zinc-finger fold. Zn(2+) contacts are provided by Cys-150, Cys-153, Cys-167, Cys-170, Cys-189, Cys-192, Cys-203, and Cys-206. 4 CXXCXGXG motif repeats span residues 150–157 (CNTCNGNG), 167–174 (CTVCGGNG), 189–196 (CPQCAGSG), and 203–210 (CTDCNGQG).

The protein belongs to the DnaJ family. In terms of assembly, homodimer. The cofactor is Zn(2+).

It is found in the cytoplasm. In terms of biological role, participates actively in the response to hyperosmotic and heat shock by preventing the aggregation of stress-denatured proteins and by disaggregating proteins, also in an autonomous, DnaK-independent fashion. Unfolded proteins bind initially to DnaJ; upon interaction with the DnaJ-bound protein, DnaK hydrolyzes its bound ATP, resulting in the formation of a stable complex. GrpE releases ADP from DnaK; ATP binding to DnaK triggers the release of the substrate protein, thus completing the reaction cycle. Several rounds of ATP-dependent interactions between DnaJ, DnaK and GrpE are required for fully efficient folding. Also involved, together with DnaK and GrpE, in the DNA replication of plasmids through activation of initiation proteins. This chain is Chaperone protein DnaJ, found in Pelagibacter ubique (strain HTCC1062).